A 398-amino-acid chain; its full sequence is 1-deoxy-D-xylulose 5-phosphate reductoisomerase (398 aa).

NADPH-binding residues include T10, G11, S12, I13, G36, R37, N38, and N124. K125 lines the 1-deoxy-D-xylulose 5-phosphate pocket. An NADPH-binding site is contributed by E126. Position 150 (D150) interacts with Mn(2+). Positions 151, 152, 186, and 209 each coordinate 1-deoxy-D-xylulose 5-phosphate. A Mn(2+)-binding site is contributed by E152. NADPH is bound at residue G215. 1-deoxy-D-xylulose 5-phosphate is bound by residues S222, N227, K228, and E231. Residue E231 coordinates Mn(2+).

Belongs to the DXR family. As to quaternary structure, homodimer. Mg(2+) serves as cofactor. It depends on Mn(2+) as a cofactor.

The enzyme catalyses 2-C-methyl-D-erythritol 4-phosphate + NADP(+) = 1-deoxy-D-xylulose 5-phosphate + NADPH + H(+). It functions in the pathway isoprenoid biosynthesis; isopentenyl diphosphate biosynthesis via DXP pathway; isopentenyl diphosphate from 1-deoxy-D-xylulose 5-phosphate: step 1/6. In terms of biological role, catalyzes the NADPH-dependent rearrangement and reduction of 1-deoxy-D-xylulose-5-phosphate (DXP) to 2-C-methyl-D-erythritol 4-phosphate (MEP). The protein is 1-deoxy-D-xylulose 5-phosphate reductoisomerase of Yersinia pseudotuberculosis serotype O:1b (strain IP 31758).